The chain runs to 304 residues: MTAGAQVIANSGHDDMIHDAVLDYYGRRLATCSSDRTIKIFEIEGESQRLVETLKGHDGAVWSVAWAHPKYGNILASAGYDGKVLIWREQAGSWQRIFDFALHKASVNIVSWSPHEAGCLLACASSDGNVSVLEFKDNSWEHNIFHAHGLGVNSVSWAPATTPGSIVSSNPGPGSTGNRRFVTGGSDNLLKIWTFDPATNGYKLEREPLAGHTDWVRDVAWSPTVLQKSYIASASQDKTVRIWTSDAANPGEWKCKVLNFDAAVWRVSWSLSGNVLAASSDNNKVTLWKENLKGEWENVKTIEE.

6 WD repeats span residues 12 to 51, 56 to 97, 102 to 143, 147 to 203, 211 to 253, and 259 to 298; these read GHDD…QRLV, GHDG…WQRI, LHKA…WEHN, AHGL…NGYK, GHTD…PGEW, and NFDA…EWEN.

Belongs to the WD repeat SEC13 family. The COPII coat is composed of at least 5 proteins: the sec23/24 complex, the sec13/31 complex, and the protein vtr-7/sar1. Component of the nuclear pore complex (NPC). NPC constitutes the exclusive means of nucleocytoplasmic transport. NPCs allow the passive diffusion of ions and small molecules and the active, nuclear transport receptor-mediated bidirectional transport of macromolecules such as proteins, RNAs, ribonucleoparticles (RNPs), and ribosomal subunits across the nuclear envelope. Due to its 8-fold rotational symmetry, all subunits are present with 8 copies or multiples thereof.

It localises to the cytoplasmic vesicle. The protein resides in the COPII-coated vesicle membrane. The protein localises to the endoplasmic reticulum membrane. It is found in the nucleus. Its subcellular location is the nuclear pore complex. In terms of biological role, component of the coat protein complex II (COPII) which promotes the formation of transport vesicles from the endoplasmic reticulum (ER). The coat has two main functions, the physical deformation of the endoplasmic reticulum membrane into vesicles and the selection of cargo molecules. It also functions as a component of the nuclear pore complex (NPC). NPC components, collectively referred to as nucleoporins (NUPs), can play the role of both NPC structural components and of docking or interaction partners for transiently associated nuclear transport factors. Nup-20/sec13 is required for efficient mRNA export from the nucleus to the cytoplasm and for correct nuclear pore biogenesis and distribution. The sequence is that of Protein transport protein sec13 (nup-20) from Neurospora crassa (strain ATCC 24698 / 74-OR23-1A / CBS 708.71 / DSM 1257 / FGSC 987).